We begin with the raw amino-acid sequence, 461 residues long: Chromosomal replication initiator protein DnaA (461 aa).

Positions methionine 1–alanine 84 are domain I, interacts with DnaA modulators. Positions alanine 84–serine 124 are domain II. Residues asparagine 125–alanine 341 form a domain III, AAA+ region region. The ATP site is built by glycine 169, glycine 171, lysine 172, and threonine 173. The segment at asparagine 342 to serine 461 is domain IV, binds dsDNA.

This sequence belongs to the DnaA family. As to quaternary structure, oligomerizes as a right-handed, spiral filament on DNA at oriC.

The protein resides in the cytoplasm. Its function is as follows. Plays an essential role in the initiation and regulation of chromosomal replication. ATP-DnaA binds to the origin of replication (oriC) to initiate formation of the DNA replication initiation complex once per cell cycle. Binds the DnaA box (a 9 base pair repeat at the origin) and separates the double-stranded (ds)DNA. Forms a right-handed helical filament on oriC DNA; dsDNA binds to the exterior of the filament while single-stranded (ss)DNA is stabiized in the filament's interior. The ATP-DnaA-oriC complex binds and stabilizes one strand of the AT-rich DNA unwinding element (DUE), permitting loading of DNA polymerase. After initiation quickly degrades to an ADP-DnaA complex that is not apt for DNA replication. Binds acidic phospholipids. In Shewanella putrefaciens (strain CN-32 / ATCC BAA-453), this protein is Chromosomal replication initiator protein DnaA.